The chain runs to 556 residues: tRNA (guanine(37)-N(1))-methyltransferase (556 aa).

The N-terminal 30 residues, 1 to 30 (MIITTKALTVLPHSGLRTTHRSLLARLRHY), are a transit peptide targeting the mitochondrion. S-adenosyl-L-methionine contacts are provided by residues H249, 287-288 (DL), 315-316 (DA), and N346. Disordered stretches follow at residues 444-465 (QHEE…KMKD) and 524-556 (KKAA…EMQM). Basic and acidic residues-rich tracts occupy residues 454 to 465 (EEAKRPSNKMKD) and 540 to 549 (SKPDTKKIEA).

It belongs to the class I-like SAM-binding methyltransferase superfamily. TRM5/TYW2 family. In terms of assembly, monomer.

The protein localises to the mitochondrion matrix. It is found in the nucleus. It localises to the cytoplasm. The enzyme catalyses guanosine(37) in tRNA + S-adenosyl-L-methionine = N(1)-methylguanosine(37) in tRNA + S-adenosyl-L-homocysteine + H(+). Functionally, specifically methylates the N1 position of guanosine-37 in various cytoplasmic and mitochondrial tRNAs. Methylation is not dependent on the nature of the nucleoside 5' of the target nucleoside. This is the first step in the biosynthesis of wybutosine (yW), a modified base adjacent to the anticodon of tRNAs and required for accurate decoding. In Anopheles gambiae (African malaria mosquito), this protein is tRNA (guanine(37)-N(1))-methyltransferase.